The primary structure comprises 242 residues: Type III pantothenate kinase (242 aa).

7 to 14 (DLGNSRFK) is an ATP binding site. Residues Tyr91 and 98–101 (GVDR) contribute to the substrate site. Asp100 serves as the catalytic Proton acceptor. Thr121 serves as a coordination point for ATP. Residue Thr171 participates in substrate binding.

It belongs to the type III pantothenate kinase family. In terms of assembly, homodimer. NH4(+) serves as cofactor. K(+) is required as a cofactor.

Its subcellular location is the cytoplasm. The catalysed reaction is (R)-pantothenate + ATP = (R)-4'-phosphopantothenate + ADP + H(+). Its pathway is cofactor biosynthesis; coenzyme A biosynthesis; CoA from (R)-pantothenate: step 1/5. In terms of biological role, catalyzes the phosphorylation of pantothenate (Pan), the first step in CoA biosynthesis. The polypeptide is Type III pantothenate kinase (Xylella fastidiosa (strain 9a5c)).